A 626-amino-acid chain; its full sequence is Kinesin-like protein Klp59C (626 aa).

Residues 1–183 (MDKLSIEQKI…VRSGTTNERI (183 aa)) form a globular region. The disordered stretch occupies residues 68-155 (CSGGNAASAN…GKNEDPGNPN (88 aa)). Positions 72–96 (NAASANQTASISPRSMKQRIATGSL) are enriched in polar residues. A compositionally biased stretch (low complexity) spans 101–112 (ATAPPRQQTAPP). Positions 113–150 (VREDEVVHQAERMRKERERRREAQARTRLDREQGKNED) are enriched in basic and acidic residues. The stretch at 115 to 150 (EDEVVHQAERMRKERERRREAQARTRLDREQGKNED) forms a coiled coil. The region spanning 187 to 521 (QIMVCVRKRP…LRYADRVKEL (335 aa)) is the Kinesin motor domain. 277–284 (GQTGSGKT) is a binding site for ATP. The segment at 557-608 (ASSTSMPGGGNQAQQHTNTANDLNRSQKPTSKPTYPTSGQQLVQRKGSSQRE) is disordered.

It belongs to the TRAFAC class myosin-kinesin ATPase superfamily. Kinesin family. MCAK/KIF2 subfamily.

The protein resides in the chromosome. Its subcellular location is the centromere. It localises to the kinetochore. It is found in the cytoplasm. The protein localises to the cytoskeleton. The protein resides in the spindle pole. Required during anaphase to drive sister chromatid separation to actively depolymerize kinetochore microtubules at their kinetochore-associated plus ends, thereby contributing to chromatid mobility through a 'Pac-man' mechanism. The protein is Kinesin-like protein Klp59C (Klp59C) of Drosophila melanogaster (Fruit fly).